The following is a 247-amino-acid chain: Cationic trypsin-3 (247 aa).

The first 15 residues, 1–15, serve as a signal peptide directing secretion; it reads MKALIFLAFLGAAVA. A propeptide spans 16–24 (activation peptide); that stretch reads LPLDDDDDK. Positions 25–245 constitute a Peptidase S1 domain; that stretch reads IVGGYTCQKN…YVNWIQQTVA (221 aa). 6 disulfide bridges follow: Cys31–Cys161, Cys49–Cys65, Cys133–Cys234, Cys140–Cys207, Cys172–Cys186, and Cys197–Cys221. His64 functions as the Charge relay system in the catalytic mechanism. Ca(2+)-binding residues include Glu76, Asn78, Val81, and Glu86. The Charge relay system role is filled by Asp108. Residue Ser201 is the Charge relay system of the active site.

Belongs to the peptidase S1 family. Ca(2+) serves as cofactor.

It is found in the secreted. It localises to the extracellular space. It carries out the reaction Preferential cleavage: Arg-|-Xaa, Lys-|-Xaa.. This chain is Cationic trypsin-3 (Try3), found in Rattus norvegicus (Rat).